Reading from the N-terminus, the 135-residue chain is Large ribosomal subunit protein uL16c (135 aa).

The protein belongs to the universal ribosomal protein uL16 family. In terms of assembly, part of the 50S ribosomal subunit.

Its subcellular location is the plastid. The protein localises to the chloroplast. The polypeptide is Large ribosomal subunit protein uL16c (Platanus occidentalis (Sycamore)).